The sequence spans 669 residues: Dymeclin (669 aa).

G2 carries N-myristoyl glycine lipidation.

Belongs to the dymeclin family. In terms of assembly, interacts with GOLM1 and PPIB. Myristoylated in vitro; myristoylation is not essential for protein targeting to Golgi compartment.

The protein resides in the cytoplasm. It localises to the golgi apparatus. Its subcellular location is the membrane. Necessary for correct organization of Golgi apparatus. Involved in bone development. The protein is Dymeclin (DYM) of Pongo abelii (Sumatran orangutan).